A 656-amino-acid chain; its full sequence is Phosphatidylinositol 4,5-bisphosphate-binding protein SLM2 (656 aa).

Residues 445-555 enclose the PH domain; sequence FEVKSGFLEK…WFGNIKALSS (111 aa). Residues 577–605 are disordered; it reads AKSNENTTESVTPQVTNEQHTRYDDVSSS. Positions 580–594 are enriched in polar residues; the sequence is NENTTESVTPQVTNE. A Phosphoserine modification is found at Ser626. The PXIXIT-like, required for interaction with CNA1 and CNA2, and calcineurin-dependent dephosphorylation motif lies at 640-645; it reads PEFYIE. 2 positions are modified to phosphoserine: Ser649 and Ser653.

In terms of assembly, heterodimer of SLM1-SLM2. Binds phosphatidylinositol 4,5-bisphosphate, which is required for function. Interacts with the TORC2 subunits AVO2, BIT61 and TOR2. Interacts with the calcineurin catalytic subunits CNA1 and CNA2.

The protein resides in the cell membrane. Together with SLM1, effector of the TORC2- and calcineurin-signaling pathways. Phosphorylated and activated by TORC2 under favorable growth conditions. Mediates actin polarization via inhibition of calcineurin-dependent transcription. Upon nutrient limitation or environmental stress, gets dephosphorylated by calcineurin, inhibiting interaction with TORC2, thereby antagonizing TORC2 signaling and mediating calcineurin-dependent actin depolarization. Also functions in heat-induced, calcineurin-mediated uracil permease (FUR4) endocytosis. This chain is Phosphatidylinositol 4,5-bisphosphate-binding protein SLM2 (SLM2), found in Saccharomyces cerevisiae (strain ATCC 204508 / S288c) (Baker's yeast).